The following is a 1246-amino-acid chain: MSSKLKYTDIDVPLDWLYKGKRRNRTKSAASTRTSEATTTSVKKTATLPSTAAVPTKTIASPQRPLSGQNVNNELSNSKPAVSAEKVSQQGQVPTRRTRSHSVSYGLLQKKNNNDDTTDSPKISRIRTAQDQPVKETKSSTLAEPIVSKKGRSRSSSISTSLNERSKKSLFGSLFGRRPSTTPSHVVERPLSSQNDHKKSTELPPIDTRQSKISTPTSTPTTASSKPSSSGGNRHSDGSLTSKLLSIPHNILETSSTNFNAHHHIQSHHSSGREQDSPHSESSDLPPILEKETTQKQLQKVSKVNLKRVTIAVQEFNSDPPQQLPSRKPKRGNVLIPEDMISAPPLISLGITNSSDQSSFQSNISPSYSKDSKEYKLALENFKKAAKEAEKHQKDAYYVAERMAQEVANYKARQLKTSPLTGATNSAADSATDQESSSLDARASKLHIDKPINVGAHPFETHQDDNIKYSSHLEQTLDVAYTRCCHLREILPIPSTLRQVKGKTAPLQTLKFLNPKPTLVDILSFCDFIAITPIHNIIFDNVSLTHDMFKIVICSLVTSPVVEKLGLRNVVINEQSWKLLCKFLLQNKTLIKLDISQTKARTDLNDSNYRDQMDWELFCEVLRNREGRPLEELLLNGLRFDKMSFSHFKNILLTFAQMNPKNPIRLGMANVEFSTECFDFLFNWMSEYNVQGVDLAYNNLESLAKRMIKKLARLPYKHLEYFTLNSTNITSVDDMSYILKYLSRLPSIKFLDLSNLPQLFPGILTSGYKYFPQFPQLKRIHFDFDDLSIKETTMLVSILAKCETLSHVSLIGQSPMPDASKISDSTDEPDKSKDEKKEQIVFMRNTLWASLYAFVRDSHNLVSLDVDYDQVPDEIQSRIALCLMHNMKRIMDSSFKLDELTVQDDLIFDGSLITETAEEVLKRLNDKSLLQNDVGKKYLLKKYFEKMEKVHHNVQNTIDSMFEKRKSGELPLQEKENLLRLLLLEKNLSNILDIFASMPNIADVVPFSKADNSFPNIGDSTVSANYNDGIRPSLKHLDSDRLINDVSIPENDSSIRPHLMATDSGRIIDVTTGKALLFKSSSNTSLAGKRQEEEEGELHKWGVFVQHQSSRHNSGLPSSANSSRISGSLTPDSSVAGGKKGESSRTSGTRPKILPKIPTGAELRDAIIKAKGIDSVDDLIKNVTSEKVGLESLYGDELNSRSPSNDSLQESQQKAPLQRPLVEDETVTKKYDKLLNDLSNVRHSKT.

3 disordered regions span residues 19–241 (KGKR…GSLT), 263–288 (HHIQ…LPPI), and 816–836 (MPDA…KDEK). Residues 27-41 (KSAASTRTSEATTTS) show a composition bias toward low complexity. Polar residues predominate over residues 58 to 95 (TIASPQRPLSGQNVNNELSNSKPAVSAEKVSQQGQVPT). Residue serine 102 is modified to Phosphoserine. A Phosphothreonine modification is found at threonine 128. Low complexity-rich tracts occupy residues 154–163 (RSSSISTSLN) and 211–230 (SKIS…PSSS). Over residues 271–282 (SGREQDSPHSES) the composition is skewed to basic and acidic residues. Residue serine 277 is modified to Phosphoserine. Serine 1013 is modified (phosphoserine). Composition is skewed to polar residues over residues 1109–1133 (SSRH…TPDS) and 1200–1215 (SRSP…QQKA). 2 disordered regions span residues 1109 to 1157 (SSRH…LPKI) and 1192 to 1224 (SLYG…LVED). The residue at position 1130 (threonine 1130) is a Phosphothreonine. Serine 1200, serine 1204, and serine 1207 each carry phosphoserine.

It belongs to the GIP3/HER1 family. May interact with ribosomes.

It localises to the cytoplasm. Required for HMG2-induced endoplasmic reticulum-remodeling. This chain is HMG2-induced ER-remodeling protein 1 (HER1), found in Saccharomyces cerevisiae (strain ATCC 204508 / S288c) (Baker's yeast).